We begin with the raw amino-acid sequence, 365 residues long: MKKQNVRTLSLIACTFTYLLVGAAVFDALESDHEMREEEKLKAEEIRIRGKYNISTEDYRQLELVILQSEPHRAGVQWKFAGSFYFAITVITTIGYGHAAPGTDAGKAFCMFYAVLGIPLTLVMFQSLGERMNTFVRYLLKRIKKCCGMRNTEVSMENMVTVGFFSCMGTLCIGAAAFSQCEEWSFFHAYYYCFITLTTIGFGDYVALQSKGALQRKPFYVAFSFMYILVGLTVIGAFLNLVVLRFLTMNSDEERGEGEEGAALPGNPSSVVTHISEEARQVRQRYRGEGGDLQSVCSCACYRSQPQNFGATLAPQPLHSISCRIEEISPSTLKNSLFPSPISSVSPGLHSFGDNHRLMLRRKSV.

At 1 to 8 (MKKQNVRT) the chain is on the cytoplasmic side. Residues 9-29 (LSLIACTFTYLLVGAAVFDAL) traverse the membrane as a helical segment. Residues 30-88 (ESDHEMREEEKLKAEEIRIRGKYNISTEDYRQLELVILQSEPHRAGVQWKFAGSFYFAI) lie on the Extracellular side of the membrane. Asn53 is a glycosylation site (N-linked (GlcNAc...) asparagine). The segment at residues 89-101 (TVITTIGYGHAAP) is an intramembrane region (pore-forming). Positions 93, 94, 95, and 96 each coordinate K(+). A selectivity filter 1 region spans residues 93–98 (TIGYGH). Over 102 to 107 (GTDAGK) the chain is Extracellular. Residues 108-128 (AFCMFYAVLGIPLTLVMFQSL) form a helical membrane-spanning segment. Residues 129–158 (GERMNTFVRYLLKRIKKCCGMRNTEVSMEN) lie on the Cytoplasmic side of the membrane. The chain crosses the membrane as a helical span at residues 159–179 (MVTVGFFSCMGTLCIGAAAFS). The Extracellular portion of the chain corresponds to 180-194 (QCEEWSFFHAYYYCF). The segment at residues 195–207 (ITLTTIGFGDYVA) is an intramembrane region (pore-forming). Positions 199, 200, 201, and 202 each coordinate K(+). Residues 199–204 (TIGFGD) form a selectivity filter 2 region. Over 208-218 (LQSKGALQRKP) the chain is Extracellular. A helical membrane pass occupies residues 219–239 (FYVAFSFMYILVGLTVIGAFL). The Cytoplasmic segment spans residues 240 to 365 (NLVVLRFLTM…HRLMLRRKSV (126 aa)). The tract at residues 243–248 (VLRFLT) is X-gate.

This sequence belongs to the two pore domain potassium channel (TC 1.A.1.8) family. In terms of assembly, homodimer. Heterodimer with KCNK1. Heterodimer with KCNK3. Highly expressed in the brain.

The protein localises to the cell membrane. It is found in the mitochondrion inner membrane. Its subcellular location is the cell projection. The protein resides in the dendrite. It catalyses the reaction K(+)(in) = K(+)(out). The catalysed reaction is Na(+)(in) = Na(+)(out). Inhibited by extracellular acidification. K(+) channel that conducts voltage-dependent outward rectifying currents upon membrane depolarization. Voltage sensing is coupled to K(+) electrochemical gradient in an 'ion flux gating' mode where outward but not inward ion flow opens the gate. Changes ion selectivity and becomes permeable to Na(+) ions in response to extracellular acidification. Protonation of the pH sensor His-98 stabilizes C-type inactivation conformation likely converting the channel from outward K(+)-conducting, to inward Na(+)-conducting to nonconductive state. Homo- and heterodimerizes to form functional channels with distinct regulatory and gating properties. Allows K(+) currents with fast-gating kinetics important for the repolarization and hyperpolarization phases of action potentials. In granule neurons, hyperpolarizes the resting membrane potential to limit intrinsic neuronal excitability, but once the action potential threshold is reached, supports high-frequency action potential firing and increased neuronal excitability. Homomeric and/or heteromeric KCNK3:KCNK9 channels operate in cerebellar granule cells, whereas heteromeric KCNK1:KCNK9 enables currents in hippocampal dentate gyrus granule neurons. Dispensable for central chemosensory respiration i.e. breathing controlled by brainstem CO2/pH, it rather conducts pH-sensitive currents and controls the firing rate of serotonergic raphe neurons involved in potentiation of the respiratory chemoreflex. In retinal ganglion cells, mediates outward rectifying currents that regulate action potentials in response to acidification of the synaptic cleft. Involved in transmission of image-forming and nonimage-forming visual information in the retina. In adrenal gland, contributes to the maintenance of a hyperpolarized resting membrane potential of aldosterone-producing cells at zona glomerulosa and limits aldosterone release as part of a regulatory mechanism that controls arterial blood pressure and electrolyte homeostasis. This is Potassium channel subfamily K member 9 (KCNK9) from Cavia porcellus (Guinea pig).